A 335-amino-acid polypeptide reads, in one-letter code: Ketol-acid reductoisomerase (NAD(P)(+)) (335 aa).

In terms of domain architecture, KARI N-terminal Rossmann spans 5-185 (AKIYTDKDTT…GGTRAGAIET (181 aa)). NADP(+) contacts are provided by residues 28-31 (YGSQ), arginine 52, serine 56, and 86-89 (DMAQ). Histidine 111 is a catalytic residue. Glycine 137 contacts NADP(+). Positions 186 to 331 (TFKEETETDL…RRLKEIIERG (146 aa)) constitute a KARI C-terminal knotted domain. Mg(2+) contacts are provided by aspartate 194, glutamate 198, glutamate 230, and glutamate 234. Serine 255 is a binding site for substrate. The interval 301-335 (GSPTLSKGLEEMDKSLEEQTGRRLKEIIERGRPKS) is disordered. The segment covering 308–335 (GLEEMDKSLEEQTGRRLKEIIERGRPKS) has biased composition (basic and acidic residues).

Belongs to the ketol-acid reductoisomerase family. Requires Mg(2+) as cofactor.

It carries out the reaction (2R)-2,3-dihydroxy-3-methylbutanoate + NAD(+) = (2S)-2-acetolactate + NADH + H(+). The enzyme catalyses (2R)-2,3-dihydroxy-3-methylbutanoate + NADP(+) = (2S)-2-acetolactate + NADPH + H(+). It functions in the pathway amino-acid biosynthesis; L-isoleucine biosynthesis; L-isoleucine from 2-oxobutanoate: step 2/4. The protein operates within amino-acid biosynthesis; L-valine biosynthesis; L-valine from pyruvate: step 2/4. Involved in the biosynthesis of branched-chain amino acids (BCAA). Catalyzes an alkyl-migration followed by a ketol-acid reduction of (S)-2-acetolactate (S2AL) to yield (R)-2,3-dihydroxy-isovalerate. In the isomerase reaction, S2AL is rearranged via a Mg-dependent methyl migration to produce 3-hydroxy-3-methyl-2-ketobutyrate (HMKB). In the reductase reaction, this 2-ketoacid undergoes a metal-dependent reduction by NADPH or NADH to yield (R)-2,3-dihydroxy-isovalerate. The protein is Ketol-acid reductoisomerase (NAD(P)(+)) of Metallosphaera sedula (strain ATCC 51363 / DSM 5348 / JCM 9185 / NBRC 15509 / TH2).